The sequence spans 436 residues: Calcium/calmodulin-regulated receptor-like kinase 2 (436 aa).

Residues 7-34 (LVVIGISVGLALGLLLALLLFFAIKWYY) form a helical membrane-spanning segment. Residues 65 to 88 (DRANTESSQPPENGAPTQHQPWWN) form a disordered region. The span at 69 to 88 (TESSQPPENGAPTQHQPWWN) shows a compositional bias: polar residues. The Protein kinase domain occupies 114–375 (QNFTTVLGQG…PSIGEVTQFI (262 aa)). ATP-binding positions include 120–128 (LGQGSFGPV) and Lys142. Phosphotyrosine is present on Tyr187. The active-site Proton acceptor is Asp239. Residue Thr276 is modified to Phosphothreonine. Tyr284 carries the post-translational modification Phosphotyrosine.

Belongs to the protein kinase superfamily. Ser/Thr protein kinase family.

The protein localises to the cell membrane. It catalyses the reaction L-seryl-[protein] + ATP = O-phospho-L-seryl-[protein] + ADP + H(+). The catalysed reaction is L-threonyl-[protein] + ATP = O-phospho-L-threonyl-[protein] + ADP + H(+). In Arabidopsis thaliana (Mouse-ear cress), this protein is Calcium/calmodulin-regulated receptor-like kinase 2.